The following is a 361-amino-acid chain: Outer membrane protein P2 (361 aa).

The N-terminal stretch at 1–20 (MKKTLAALIVGAFAASAANA) is a signal peptide.

The protein belongs to the Gram-negative porin family. In terms of assembly, homotrimer.

It localises to the cell outer membrane. Functionally, forms pores that allow passive diffusion of small molecules across the outer membrane. The protein is Outer membrane protein P2 (ompP2) of Haemophilus influenzae.